Reading from the N-terminus, the 108-residue chain is Thiosulfate sulfurtransferase GlpE (108 aa).

Residues 17–105 (QEKEAVLVDI…WQRQFPAEVA (89 aa)) form the Rhodanese domain. The active-site Cysteine persulfide intermediate is the cysteine 65.

This sequence belongs to the GlpE family.

Its subcellular location is the cytoplasm. It catalyses the reaction thiosulfate + hydrogen cyanide = thiocyanate + sulfite + 2 H(+). The enzyme catalyses thiosulfate + [thioredoxin]-dithiol = [thioredoxin]-disulfide + hydrogen sulfide + sulfite + 2 H(+). Transferase that catalyzes the transfer of sulfur from thiosulfate to thiophilic acceptors such as cyanide or dithiols. May function in a CysM-independent thiosulfate assimilation pathway by catalyzing the conversion of thiosulfate to sulfite, which can then be used for L-cysteine biosynthesis. The polypeptide is Thiosulfate sulfurtransferase GlpE (Escherichia coli O45:K1 (strain S88 / ExPEC)).